The sequence spans 248 residues: mRNA-decapping protein OPG122 (248 aa).

The region spanning 45-227 is the Nudix hydrolase domain; that stretch reads HKRVSVSAIL…IAKYALDTAK (183 aa). Positions 126–147 match the Nudix box motif; it reads GIPKRGENVPECLSREIKEEVN. A Mg(2+)-binding site is contributed by glutamate 132. Glutamate 141 (nucleophile) is an active-site residue. Mn(2+) is bound at residue glutamate 145. Aspartate 167 serves as a coordination point for Mg(2+).

This sequence belongs to the Nudix hydrolase family. Requires Mg(2+) as cofactor. Mn(2+) is required as a cofactor.

The protein resides in the host mitochondrion. Functionally, decapping enzyme that remove the protective 5'-cap from both host and viral mRNAs to commit transcripts for decay by the cellular exonuclease XRN1. Preferentially targets spliced mRNAs and since all viral genes are intronless, it preferentially targets host over viral transcripts. Acceleration of the turnover of cellular transcripts promotes the shutoff of host protein synthesis and therefore diminish the magnitude of antiviral response. This Bos taurus (Bovine) protein is mRNA-decapping protein OPG122 (OPG122).